The sequence spans 138 residues: Large ribosomal subunit protein uL16 (138 aa).

Belongs to the universal ribosomal protein uL16 family. In terms of assembly, part of the 50S ribosomal subunit.

Its function is as follows. Binds 23S rRNA and is also seen to make contacts with the A and possibly P site tRNAs. This Mycoplasma genitalium (strain ATCC 33530 / DSM 19775 / NCTC 10195 / G37) (Mycoplasmoides genitalium) protein is Large ribosomal subunit protein uL16.